Reading from the N-terminus, the 306-residue chain is Porphobilinogen deaminase (306 aa).

The residue at position 240 (C240) is an S-(dipyrrolylmethanemethyl)cysteine.

The protein belongs to the HMBS family. As to quaternary structure, monomer. The cofactor is dipyrromethane.

It catalyses the reaction 4 porphobilinogen + H2O = hydroxymethylbilane + 4 NH4(+). It functions in the pathway porphyrin-containing compound metabolism; protoporphyrin-IX biosynthesis; coproporphyrinogen-III from 5-aminolevulinate: step 2/4. Its function is as follows. Tetrapolymerization of the monopyrrole PBG into the hydroxymethylbilane pre-uroporphyrinogen in several discrete steps. This is Porphobilinogen deaminase from Syntrophomonas wolfei subsp. wolfei (strain DSM 2245B / Goettingen).